The following is a 206-amino-acid chain: Large ribosomal subunit protein uL4 (206 aa).

The segment at 63–97 is disordered; that stretch reads MYKQKGTGRARHHSARAPQFRGGGKAHGPVVRSHE. Residues 64–77 are compositionally biased toward basic residues; it reads YKQKGTGRARHHSA.

This sequence belongs to the universal ribosomal protein uL4 family. As to quaternary structure, part of the 50S ribosomal subunit.

Its function is as follows. One of the primary rRNA binding proteins, this protein initially binds near the 5'-end of the 23S rRNA. It is important during the early stages of 50S assembly. It makes multiple contacts with different domains of the 23S rRNA in the assembled 50S subunit and ribosome. Functionally, forms part of the polypeptide exit tunnel. This chain is Large ribosomal subunit protein uL4, found in Rhizobium rhizogenes (strain K84 / ATCC BAA-868) (Agrobacterium radiobacter).